The primary structure comprises 227 residues: UPF0758 protein Pcryo_2119 (227 aa).

Positions 102–224 constitute an MPN domain; it reads GLGRSQMVKD…TLSYAENSLP (123 aa). Zn(2+) contacts are provided by H173, H175, and D186. Positions 173–186 match the JAMM motif motif; the sequence is HNHPHTDAKPSTAD.

Belongs to the UPF0758 family.

The polypeptide is UPF0758 protein Pcryo_2119 (Psychrobacter cryohalolentis (strain ATCC BAA-1226 / DSM 17306 / VKM B-2378 / K5)).